The following is a 445-amino-acid chain: Xylose isomerase (445 aa).

Catalysis depends on residues His107 and Asp110. Residues Glu238, Glu274, His277, Asp302, Asp313, Asp315, and Asp345 each coordinate Mg(2+).

The protein belongs to the xylose isomerase family. In terms of assembly, homotetramer. Mg(2+) is required as a cofactor.

It is found in the cytoplasm. It carries out the reaction alpha-D-xylose = alpha-D-xylulofuranose. This Bacillus velezensis (strain DSM 23117 / BGSC 10A6 / LMG 26770 / FZB42) (Bacillus amyloliquefaciens subsp. plantarum) protein is Xylose isomerase.